The primary structure comprises 1011 residues: Protein FAM83B (1011 aa).

Positions 1 to 283 (METSSMLSSL…RTLYARSCVP (283 aa)) are DUF1669. The interval 1–284 (METSSMLSSL…TLYARSCVPS (284 aa)) is required for interaction with RAF1 and for the function. Phosphoserine is present on residues Ser334, Ser422, Ser424, Ser466, and Ser543. Residues 555–585 (EVNSCTTGSSNSTIIGSQGSETPKEVPDTPT) form a disordered region. Over residues 557–574 (NSCTTGSSNSTIIGSQGS) the composition is skewed to low complexity. At Ser664 the chain carries Phosphoserine. 2 disordered regions span residues 691 to 738 (NRVR…TKSV) and 750 to 769 (ESNK…SFLK). Basic and acidic residues predominate over residues 694–705 (RQPEKPKEDLLK). 2 stretches are compositionally biased toward polar residues: residues 706 to 715 (SSKSMHNVTH) and 727 to 738 (RNSPSGTTTKSV). Positions 750–762 (ESNKELASKKEVK) are enriched in basic and acidic residues. At Thr782 the chain carries Phosphothreonine. Ser802 is modified (phosphoserine). Residues 807 to 928 (LVSEGEENQK…TSSELLRSHS (122 aa)) are disordered. Over residues 813–828 (ENQKPKKSDTKVDSSP) the composition is skewed to basic and acidic residues. 3 positions are modified to phosphoserine: Ser852, Ser869, and Ser915. The span at 913–923 (TSSPRPTSSEL) shows a compositional bias: low complexity.

Belongs to the FAM83 family. As to quaternary structure, interacts with EGFR; positively regulates EGFR inducing its autophosphorylation in absence of stimulation by EGF. Interacts with RAF1; displaces 14-3-3 proteins from RAF1 and activates RAF1 within the RAS/MAPK signaling cascade. Interacts with AKT1, PIK3CA and PIK3R1; activates the PI3K/AKT signaling cascade. Directly interacts (via DUF1669) with casein kinase isoforms CSNK1A1, CSNK1A1L, CSNK1D and CSNK1E. Post-translationally, phosphorylated in vitro by CSNK1A1.

It is found in the cytoplasm. Its subcellular location is the membrane. In terms of biological role, probable proto-oncogene that functions in the epidermal growth factor receptor/EGFR signaling pathway. Activates both the EGFR itself and downstream RAS/MAPK and PI3K/AKT/TOR signaling cascades. This is Protein FAM83B from Homo sapiens (Human).